We begin with the raw amino-acid sequence, 1041 residues long: Protein SMAX1-like (1041 aa).

Residues 8 to 188 form the Clp R domain; it reads IQQTLTPEAA…KSIIEQSLSA (181 aa). Repeat regions lie at residues 12–98 and 117–188; these read LTPE…LDRL and VSNA…SLSA. The span at 189–205 shows a compositional bias: low complexity; it reads PSPCPSAAASTTTAGPG. Disordered regions lie at residues 189–214, 482–513, and 889–913; these read PSPCPSAAASTTTAGPGPLSPSPSPL, EAEQTDKPASRPEAAKPGLPHWLQLSNDQNKA, and EGSHNSSDVSVEQEQEKGQLAVKRS. The span at 482 to 495 shows a compositional bias: basic and acidic residues; the sequence is EAEQTDKPASRPEA. Over residues 891 to 900 the composition is skewed to polar residues; it reads SHNSSDVSVE.

This sequence belongs to the ClpA/ClpB family.

May act downstream of MAX2 to negatively regulate karrikins/strigolactone responses. Acts probably specifically in the karrikin pathway. May function in a transcriptional corepressor complex. This chain is Protein SMAX1-like, found in Oryza sativa subsp. japonica (Rice).